Reading from the N-terminus, the 666-residue chain is 1-deoxy-D-xylulose-5-phosphate synthase (666 aa).

Thiamine diphosphate contacts are provided by residues His-103 and 144–146 (AHS). Asp-175 lines the Mg(2+) pocket. Residues 176–177 (GA), Asn-204, Tyr-314, and Glu-396 contribute to the thiamine diphosphate site. Asn-204 provides a ligand contact to Mg(2+).

This sequence belongs to the transketolase family. DXPS subfamily. Homodimer. Mg(2+) serves as cofactor. Thiamine diphosphate is required as a cofactor.

The catalysed reaction is D-glyceraldehyde 3-phosphate + pyruvate + H(+) = 1-deoxy-D-xylulose 5-phosphate + CO2. The protein operates within metabolic intermediate biosynthesis; 1-deoxy-D-xylulose 5-phosphate biosynthesis; 1-deoxy-D-xylulose 5-phosphate from D-glyceraldehyde 3-phosphate and pyruvate: step 1/1. In terms of biological role, catalyzes the acyloin condensation reaction between C atoms 2 and 3 of pyruvate and glyceraldehyde 3-phosphate to yield 1-deoxy-D-xylulose-5-phosphate (DXP). The protein is 1-deoxy-D-xylulose-5-phosphate synthase of Nitrobacter winogradskyi (strain ATCC 25391 / DSM 10237 / CIP 104748 / NCIMB 11846 / Nb-255).